The primary structure comprises 124 residues: Small ribosomal subunit protein uS12 (124 aa).

3-methylthioaspartic acid is present on aspartate 89. Residues 105–124 (TGVDSRMQGRSKYGTKKPKK) form a disordered region.

It belongs to the universal ribosomal protein uS12 family. As to quaternary structure, part of the 30S ribosomal subunit. Contacts proteins S8 and S17. May interact with IF1 in the 30S initiation complex.

With S4 and S5 plays an important role in translational accuracy. Its function is as follows. Interacts with and stabilizes bases of the 16S rRNA that are involved in tRNA selection in the A site and with the mRNA backbone. Located at the interface of the 30S and 50S subunits, it traverses the body of the 30S subunit contacting proteins on the other side and probably holding the rRNA structure together. The combined cluster of proteins S8, S12 and S17 appears to hold together the shoulder and platform of the 30S subunit. In Vesicomyosocius okutanii subsp. Calyptogena okutanii (strain HA), this protein is Small ribosomal subunit protein uS12.